Consider the following 293-residue polypeptide: Inhibitory synaptic factor 1 (293 aa).

The disordered stretch occupies residues 1–26 (MNIRGAPDLGQPSDDPSSGGERERIR). A coiled-coil region spans residues 30 to 63 (KMVIGQLEGILRELKEVAKELREVVSQIDKLTSD). Disordered regions lie at residues 120–186 (TPSD…RERV) and 200–293 (DDEE…RGKN). A compositionally biased stretch (polar residues) spans 171 to 180 (VKSQLPQRTP). Residues 200 to 215 (DDEEGDGEQEVEEEEV) are compositionally biased toward acidic residues. Polar residues-rich tracts occupy residues 243-256 (SPLTSRHSGSTLAP) and 264-286 (RNSSTQTVSDKSTQTVLPYTATR).

The protein belongs to the INSYN1 family. In terms of assembly, interacts with GPHN.

The protein resides in the postsynaptic density. Component of the protein machinery at the inhibitory synapses, probably acting as a scaffold. Inhibitory synapses dampen neuronal activity through postsynaptic hyperpolarization. This synaptic inhibition is fundamental for the functioning of the central nervous system, shaping and orchestrating the flow of information through neuronal networks to generate a precise neural code. This is Inhibitory synaptic factor 1 from Homo sapiens (Human).